Consider the following 221-residue polypeptide: Germin-like protein subfamily 1 member 15 (221 aa).

The first 21 residues, 1–21 (MKVSMSLILITFWALVTIAKA), serve as a signal peptide directing secretion. The cysteines at positions 31 and 48 are disulfide-linked. Positions 62–213 (SGLNQAGITN…AFQLDVNVVK (152 aa)) constitute a Cupin type-1 domain. A glycan (N-linked (GlcNAc...) asparagine) is linked at asparagine 77. 4 residues coordinate Mn(2+): histidine 110, histidine 112, glutamate 117, and histidine 159.

The protein belongs to the germin family. Oligomer (believed to be a pentamer but probably hexamer).

Its subcellular location is the secreted. The protein resides in the extracellular space. It is found in the apoplast. In terms of biological role, may play a role in plant defense. Probably has no oxalate oxidase activity even if the active site is conserved. The polypeptide is Germin-like protein subfamily 1 member 15 (Arabidopsis thaliana (Mouse-ear cress)).